A 403-amino-acid chain; its full sequence is Acetate kinase (403 aa).

Residue Asn13 participates in Mg(2+) binding. An ATP-binding site is contributed by Lys20. Arg94 is a binding site for substrate. Asp153 (proton donor/acceptor) is an active-site residue. Residues 213-217 (HLGNG), 288-290 (DFR), and 336-340 (GIGEN) contribute to the ATP site. Mg(2+) is bound at residue Glu390.

The protein belongs to the acetokinase family. As to quaternary structure, homodimer. It depends on Mg(2+) as a cofactor. Requires Mn(2+) as cofactor.

Its subcellular location is the cytoplasm. It carries out the reaction acetate + ATP = acetyl phosphate + ADP. The protein operates within metabolic intermediate biosynthesis; acetyl-CoA biosynthesis; acetyl-CoA from acetate: step 1/2. Its function is as follows. Catalyzes the formation of acetyl phosphate from acetate and ATP. Can also catalyze the reverse reaction. The chain is Acetate kinase from Buchnera aphidicola subsp. Schizaphis graminum (strain Sg).